Reading from the N-terminus, the 319-residue chain is Methionyl-tRNA formyltransferase (319 aa).

114 to 117 (SLLP) contributes to the (6S)-5,6,7,8-tetrahydrofolate binding site.

This sequence belongs to the Fmt family.

The catalysed reaction is L-methionyl-tRNA(fMet) + (6R)-10-formyltetrahydrofolate = N-formyl-L-methionyl-tRNA(fMet) + (6S)-5,6,7,8-tetrahydrofolate + H(+). In terms of biological role, attaches a formyl group to the free amino group of methionyl-tRNA(fMet). The formyl group appears to play a dual role in the initiator identity of N-formylmethionyl-tRNA by promoting its recognition by IF2 and preventing the misappropriation of this tRNA by the elongation apparatus. The sequence is that of Methionyl-tRNA formyltransferase from Acinetobacter baylyi (strain ATCC 33305 / BD413 / ADP1).